The primary structure comprises 108 residues: Urease subunit beta (108 aa).

It belongs to the urease beta subunit family. As to quaternary structure, heterotrimer of UreA (gamma), UreB (beta) and UreC (alpha) subunits. Three heterotrimers associate to form the active enzyme.

The protein resides in the cytoplasm. It carries out the reaction urea + 2 H2O + H(+) = hydrogencarbonate + 2 NH4(+). The protein operates within nitrogen metabolism; urea degradation; CO(2) and NH(3) from urea (urease route): step 1/1. The chain is Urease subunit beta from Proteus hauseri.